The primary structure comprises 342 residues: Holliday junction branch migration complex subunit RuvB (342 aa).

A large ATPase domain (RuvB-L) region spans residues 1–185 (MRKDYLNSNK…FGINTRLAYY (185 aa)). ATP contacts are provided by residues L24, R25, G66, K69, T70, T71, 132-134 (EDF), R175, Y185, and R222. A Mg(2+)-binding site is contributed by T70. Residues 186–256 (DVTLLTQIVK…IAQMALKALD (71 aa)) form a small ATPAse domain (RuvB-S) region. A head domain (RuvB-H) region spans residues 259–342 (EDGLDEMDNR…PPQRAGTLFE (84 aa)). Residues R314 and R319 each contribute to the DNA site.

Belongs to the RuvB family. As to quaternary structure, homohexamer. Forms an RuvA(8)-RuvB(12)-Holliday junction (HJ) complex. HJ DNA is sandwiched between 2 RuvA tetramers; dsDNA enters through RuvA and exits via RuvB. An RuvB hexamer assembles on each DNA strand where it exits the tetramer. Each RuvB hexamer is contacted by two RuvA subunits (via domain III) on 2 adjacent RuvB subunits; this complex drives branch migration. In the full resolvosome a probable DNA-RuvA(4)-RuvB(12)-RuvC(2) complex forms which resolves the HJ.

The protein resides in the cytoplasm. The enzyme catalyses ATP + H2O = ADP + phosphate + H(+). Its function is as follows. The RuvA-RuvB-RuvC complex processes Holliday junction (HJ) DNA during genetic recombination and DNA repair, while the RuvA-RuvB complex plays an important role in the rescue of blocked DNA replication forks via replication fork reversal (RFR). RuvA specifically binds to HJ cruciform DNA, conferring on it an open structure. The RuvB hexamer acts as an ATP-dependent pump, pulling dsDNA into and through the RuvAB complex. RuvB forms 2 homohexamers on either side of HJ DNA bound by 1 or 2 RuvA tetramers; 4 subunits per hexamer contact DNA at a time. Coordinated motions by a converter formed by DNA-disengaged RuvB subunits stimulates ATP hydrolysis and nucleotide exchange. Immobilization of the converter enables RuvB to convert the ATP-contained energy into a lever motion, pulling 2 nucleotides of DNA out of the RuvA tetramer per ATP hydrolyzed, thus driving DNA branch migration. The RuvB motors rotate together with the DNA substrate, which together with the progressing nucleotide cycle form the mechanistic basis for DNA recombination by continuous HJ branch migration. Branch migration allows RuvC to scan DNA until it finds its consensus sequence, where it cleaves and resolves cruciform DNA. This Amoebophilus asiaticus (strain 5a2) protein is Holliday junction branch migration complex subunit RuvB.